We begin with the raw amino-acid sequence, 355 residues long: UPF0421 protein BALH_2468 (355 aa).

Transmembrane regions (helical) follow at residues 19–39 (IAVF…IFAV), 74–94 (FTFF…FTIV), 109–129 (TLTA…AFLI), and 131–151 (LATT…ILPP).

The protein belongs to the UPF0421 family.

Its subcellular location is the cell membrane. In Bacillus thuringiensis (strain Al Hakam), this protein is UPF0421 protein BALH_2468.